A 77-amino-acid polypeptide reads, in one-letter code: Translation initiation factor IF-1, chloroplastic (77 aa).

The S1-like domain occupies 1-71 (MKEQKWIHEG…TRGRIIYRLR (71 aa)).

This sequence belongs to the IF-1 family. As to quaternary structure, component of the 30S ribosomal translation pre-initiation complex which assembles on the 30S ribosome in the order IF-2 and IF-3, IF-1 and N-formylmethionyl-tRNA(fMet); mRNA recruitment can occur at any time during PIC assembly.

It localises to the plastid. The protein localises to the chloroplast. Its function is as follows. One of the essential components for the initiation of protein synthesis. Stabilizes the binding of IF-2 and IF-3 on the 30S subunit to which N-formylmethionyl-tRNA(fMet) subsequently binds. Helps modulate mRNA selection, yielding the 30S pre-initiation complex (PIC). Upon addition of the 50S ribosomal subunit IF-1, IF-2 and IF-3 are released leaving the mature 70S translation initiation complex. This is Translation initiation factor IF-1, chloroplastic from Nandina domestica (Heavenly bamboo).